Reading from the N-terminus, the 539-residue chain is Hydroxylamine reductase (539 aa).

[4Fe-4S] cluster is bound by residues C3, C6, C14, and C20. Hybrid [4Fe-2O-2S] cluster is bound by residues H232, E256, C300, C392, C420, C445, E480, and K482. At C392 the chain carries Cysteine persulfide.

This sequence belongs to the HCP family. Requires [4Fe-4S] cluster as cofactor. The cofactor is hybrid [4Fe-2O-2S] cluster.

The protein resides in the cytoplasm. It carries out the reaction A + NH4(+) + H2O = hydroxylamine + AH2 + H(+). Functionally, catalyzes the reduction of hydroxylamine to form NH(3) and H(2)O. This is Hydroxylamine reductase from Chlorobaculum tepidum (strain ATCC 49652 / DSM 12025 / NBRC 103806 / TLS) (Chlorobium tepidum).